The following is a 50-amino-acid chain: Toxic protein HokC (50 aa).

Residues 1-5 (MKQHK) lie on the Cytoplasmic side of the membrane. A helical; Signal-anchor for type II membrane protein transmembrane segment spans residues 6–24 (AMIVALIVICITAVVAALV). At 25 to 50 (TRKDLCEVHIRTGQTEVAVFTAYESE) the chain is on the periplasmic side.

The protein belongs to the Hok/Gef family. Homodimer; disulfide-linked.

It localises to the cell inner membrane. Its function is as follows. Toxic component of a type I toxin-antitoxin (TA) system. When overexpressed kills cells within minutes; causes collapse of the transmembrane potential and arrest of respiration. Its toxic effect is probably neutralized by antisense antitoxin RNA SokC. The polypeptide is Toxic protein HokC (Escherichia coli (strain K12)).